The following is a 162-amino-acid chain: ATP synthase subunit b (162 aa).

A helical membrane pass occupies residues 6 to 26 (PDIGLLFWMLLSFGIVFFVAA).

It belongs to the ATPase B chain family. F-type ATPases have 2 components, F(1) - the catalytic core - and F(0) - the membrane proton channel. F(1) has five subunits: alpha(3), beta(3), gamma(1), delta(1), epsilon(1). F(0) has three main subunits: a(1), b(2) and c(10-14). The alpha and beta chains form an alternating ring which encloses part of the gamma chain. F(1) is attached to F(0) by a central stalk formed by the gamma and epsilon chains, while a peripheral stalk is formed by the delta and b chains.

It is found in the cell inner membrane. Functionally, f(1)F(0) ATP synthase produces ATP from ADP in the presence of a proton or sodium gradient. F-type ATPases consist of two structural domains, F(1) containing the extramembraneous catalytic core and F(0) containing the membrane proton channel, linked together by a central stalk and a peripheral stalk. During catalysis, ATP synthesis in the catalytic domain of F(1) is coupled via a rotary mechanism of the central stalk subunits to proton translocation. In terms of biological role, component of the F(0) channel, it forms part of the peripheral stalk, linking F(1) to F(0). In Azobacteroides pseudotrichonymphae genomovar. CFP2, this protein is ATP synthase subunit b.